The following is a 160-amino-acid chain: UPF0262 protein Oant_0325 (160 aa).

It belongs to the UPF0262 family.

The polypeptide is UPF0262 protein Oant_0325 (Brucella anthropi (strain ATCC 49188 / DSM 6882 / CCUG 24695 / JCM 21032 / LMG 3331 / NBRC 15819 / NCTC 12168 / Alc 37) (Ochrobactrum anthropi)).